A 596-amino-acid chain; its full sequence is Signal peptide peptidase-like 2B (596 aa).

An N-terminal signal peptide occupies residues 1 to 21; it reads MAARWAQFLLFSLLSLPQVYC. The Lumenal portion of the chain corresponds to 22–170; that stretch reads EYGMVHVLSE…APNEPVLDYN (149 aa). The PA domain occupies 53-147; sequence HDLGKASLLQ…LLSYSDMLDI (95 aa). Residue asparagine 93 is glycosylated (N-linked (GlcNAc...) asparagine). The helical transmembrane segment at 171–191 threads the bilayer; that stretch reads MVIIFVMAVGTVAIGGYWAGS. Residues 192–219 lie on the Cytoplasmic side of the membrane; it reads RDVKERYMKHKRDDGAEKHEDETVDVTP. A helical membrane pass occupies residues 220–240; the sequence is IMICVFVVMCCSMLVLLYFFY. Topologically, residues 241–242 are lumenal; that stretch reads DH. Residues 243–263 traverse the membrane as a helical segment; the sequence is LVYVIIGIFCLAASIGLYSCL. Topologically, residues 264 to 289 are cytoplasmic; it reads SPFVRRFPLGKCRIPDNNLPYFHKRP. The helical transmembrane segment at 290–310 threads the bilayer; it reads QVRILLLAVFCISVSVVWGVF. The Lumenal portion of the chain corresponds to 311–315; it reads RNEDQ. The chain crosses the membrane as a helical span at residues 316-336; sequence WAWVLQDALGIAFCLYMLKTI. At 337–344 the chain is on the cytoplasmic side; sequence RLPTFKGC. Residues 345–365 traverse the membrane as a helical segment; that stretch reads TLLLLVLFVYDVFFVFITPFL. Residue aspartate 355 is part of the active site. Over 366–408 the chain is Lumenal; the sequence is TKTGESIMVEVAAGPSDSATHEKLPMVLKVPRLNSSPLALCDR. A helical membrane pass occupies residues 409 to 429; sequence PFSLLGFGDILVPGLLVAYCH. Residue aspartate 417 is part of the active site. The Cytoplasmic segment spans residues 430 to 441; that stretch reads RFDIQVQSSRVY. A helical transmembrane segment spans residues 442 to 462; the sequence is FVACTIAYGIGLLVTFVALAL. The Lumenal segment spans residues 463–466; sequence MQMG. The helical transmembrane segment at 467–487 threads the bilayer; it reads QPALLYLVPCTLITSFSVALW. The PAL signature appears at 468 to 470; the sequence is PAL. The Cytoplasmic portion of the chain corresponds to 488 to 596; it reads RKELAMFWTG…SLNLEQKQLE (109 aa). Residues 543–596 are disordered; the sequence is KELHSPTLAAEEPADNDTKTEQSEVSIAQSEEAAGHNKDDLESKSLNLEQKQLE. Residues 575-585 are compositionally biased toward basic and acidic residues; that stretch reads AAGHNKDDLES. Over residues 586–596 the composition is skewed to polar residues; sequence KSLNLEQKQLE.

It belongs to the peptidase A22B family.

It is found in the cell membrane. Its subcellular location is the golgi apparatus membrane. It localises to the lysosome membrane. The protein localises to the endosome membrane. The protein resides in the membrane. Intramembrane-cleaving aspartic protease (I-CLiP) that cleaves type II membrane signal peptides in the hydrophobic plane of the membrane. The protein is Signal peptide peptidase-like 2B of Gallus gallus (Chicken).